The sequence spans 638 residues: Protein NSP-INTERACTING KINASE 1 (638 aa).

The signal sequence occupies residues 1 to 31 (MESTIVMMMMITRSFFCFLGFLCLLCSSVHG). The Extracellular portion of the chain corresponds to 32–248 (LLSPKGVNFE…AGGSRNHKMA (217 aa)). N-linked (GlcNAc...) asparagine glycosylation is found at Asn92 and Asn103. LRR repeat units lie at residues 104–128 (LTNL…IGRL), 130–152 (RLET…VGYL), 153–175 (QSLQ…SLSN), and 177–200 (TQLA…AAKT). Asn162, Asn175, Asn188, Asn219, and Asn231 each carry an N-linked (GlcNAc...) asparagine glycan. The helical transmembrane segment at 249 to 269 (IAVGSSVGTVSLIFIAVGLFL) threads the bilayer. The Cytoplasmic segment spans residues 270 to 638 (WWRQRHNQNT…VQAMELSGPR (369 aa)). The residue at position 309 (Thr309) is a Phosphothreonine. Residues 312–593 (FSSKNLLGKG…EGDGLAEKWE (282 aa)) enclose the Protein kinase domain. Residue 318-326 (LGKGGYGNV) coordinates ATP. Thr335 carries the post-translational modification Phosphothreonine. Lys340 contacts ATP. Ser393 and Ser396 each carry phosphoserine. The interaction with geminivirus NSP protein stretch occupies residues 422 to 502 (YLHEQCDPKI…DVFGFGILLL (81 aa)). The active-site Proton acceptor is Asp435. Thr468, Thr469, and Thr474 each carry phosphothreonine. At Tyr482 the chain carries Phosphotyrosine. Phosphoserine is present on Ser484. Thr485 carries the post-translational modification Phosphothreonine. Phosphoserine is present on Ser489. Thr566 carries the post-translational modification Phosphothreonine.

The protein belongs to the protein kinase superfamily. Ser/Thr protein kinase family. Oligomer. Interacts with geminivirus nuclear shuttle protein (NSP). Interacts with RPL10A and RPL18B. In terms of processing, autophosphorylated. Expressed in seedlings, leaves, roots, stems and flowers.

The protein localises to the cell membrane. The catalysed reaction is L-seryl-[protein] + ATP = O-phospho-L-seryl-[protein] + ADP + H(+). It carries out the reaction L-threonyl-[protein] + ATP = O-phospho-L-threonyl-[protein] + ADP + H(+). With respect to regulation, inhibited by the viral nuclear shuttle protein (NSP) that binds to the region required for oligomerization. Its function is as follows. Involved in defense response to geminivirus and begomovirus infection via regulation of the nuclear trafficking of RPL10A. Phosphorylates RPL10A in vitro. Activation of NIK1 down-regulates cytosolic translation. The protein is Protein NSP-INTERACTING KINASE 1 of Arabidopsis thaliana (Mouse-ear cress).